Reading from the N-terminus, the 480-residue chain is Protein nucleotidyltransferase YdiU (480 aa).

8 residues coordinate ATP: Gly86, Gly88, Arg89, Lys109, Asp121, Gly122, Arg172, and Arg179. Asp248 serves as the catalytic Proton acceptor. Mg(2+)-binding residues include Asn249 and Asp258. Asp258 contacts ATP.

It belongs to the SELO family. Requires Mg(2+) as cofactor. Mn(2+) serves as cofactor.

It carries out the reaction L-seryl-[protein] + ATP = 3-O-(5'-adenylyl)-L-seryl-[protein] + diphosphate. The catalysed reaction is L-threonyl-[protein] + ATP = 3-O-(5'-adenylyl)-L-threonyl-[protein] + diphosphate. The enzyme catalyses L-tyrosyl-[protein] + ATP = O-(5'-adenylyl)-L-tyrosyl-[protein] + diphosphate. It catalyses the reaction L-histidyl-[protein] + UTP = N(tele)-(5'-uridylyl)-L-histidyl-[protein] + diphosphate. It carries out the reaction L-seryl-[protein] + UTP = O-(5'-uridylyl)-L-seryl-[protein] + diphosphate. The catalysed reaction is L-tyrosyl-[protein] + UTP = O-(5'-uridylyl)-L-tyrosyl-[protein] + diphosphate. Functionally, nucleotidyltransferase involved in the post-translational modification of proteins. It can catalyze the addition of adenosine monophosphate (AMP) or uridine monophosphate (UMP) to a protein, resulting in modifications known as AMPylation and UMPylation. The polypeptide is Protein nucleotidyltransferase YdiU (Enterobacter sp. (strain 638)).